The sequence spans 139 residues: Large-conductance mechanosensitive channel (139 aa).

Transmembrane regions (helical) follow at residues A9 to F29 and I79 to I99.

The protein belongs to the MscL family. In terms of assembly, homopentamer.

The protein localises to the cell inner membrane. Channel that opens in response to stretch forces in the membrane lipid bilayer. May participate in the regulation of osmotic pressure changes within the cell. The polypeptide is Large-conductance mechanosensitive channel (Pseudomonas fluorescens (strain SBW25)).